Here is a 969-residue protein sequence, read N- to C-terminus: Translation initiation factor IF-2 (969 aa).

Basic and acidic residues predominate over residues 49 to 63 (HLRKSHGATDGDKRK). Disordered stretches follow at residues 49-85 (HLRK…KART), 100-128 (DDVS…REEE), and 143-380 (LRER…SFQA). A compositionally biased stretch (low complexity) spans 105 to 114 (VAEQGQAQVA). The span at 143–181 (LRERQERLEREEAERRAREEAAEAERRRAEEEAAAKRAA) shows a compositional bias: basic and acidic residues. The segment covering 182-206 (AEAAAAQQAAQQAAAAQQAAAPADS) has biased composition (low complexity). Positions 209 to 260 (DEARAAAERAAQREAAKKAEDAAREAAEKARAEQEEIRKRREAAEAEARAIR) are enriched in basic and acidic residues. A compositionally biased stretch (low complexity) spans 301-323 (AQARPAAKKPAAAPAATPAPAGA). Over residues 353 to 366 (SSGGVDRGWRGGPK) the composition is skewed to gly residues. One can recognise a tr-type G domain in the interval 469-638 (PRPPVVTVMG…LLQAEVLELK (170 aa)). Positions 478 to 485 (GHVDHGKT) are G1. Position 478–485 (478–485 (GHVDHGKT)) interacts with GTP. The G2 stretch occupies residues 503 to 507 (GITQH). The tract at residues 524 to 527 (DTPG) is G3. GTP-binding positions include 524 to 528 (DTPGH) and 578 to 581 (NKID). The segment at 578–581 (NKID) is G4. Residues 614 to 616 (SAK) form a G5 region.

It belongs to the TRAFAC class translation factor GTPase superfamily. Classic translation factor GTPase family. IF-2 subfamily.

It localises to the cytoplasm. In terms of biological role, one of the essential components for the initiation of protein synthesis. Protects formylmethionyl-tRNA from spontaneous hydrolysis and promotes its binding to the 30S ribosomal subunits. Also involved in the hydrolysis of GTP during the formation of the 70S ribosomal complex. The polypeptide is Translation initiation factor IF-2 (Burkholderia multivorans (strain ATCC 17616 / 249)).